The primary structure comprises 276 residues: Glucosamine-6-phosphate deaminase 2 (276 aa).

The Proton acceptor; for enolization step role is filled by aspartate 72. A coiled-coil region spans residues 103-131 (NAHILDGNAADLQAECDAFEEKIKEAGGI). Residue aspartate 141 is the For ring-opening step of the active site. The active-site Proton acceptor; for ring-opening step is histidine 143. Residue glutamate 148 is the For ring-opening step of the active site. Residue threonine 161 is modified to Phosphothreonine.

This sequence belongs to the glucosamine/galactosamine-6-phosphate isomerase family. In terms of assembly, homohexamer.

The protein resides in the cytoplasm. It carries out the reaction alpha-D-glucosamine 6-phosphate + H2O = beta-D-fructose 6-phosphate + NH4(+). The protein operates within nucleotide-sugar biosynthesis; UDP-N-acetyl-alpha-D-glucosamine biosynthesis; alpha-D-glucosamine 6-phosphate from D-fructose 6-phosphate: step 1/1. With respect to regulation, allosterically activated by N-acetylglucosamine-6-phosphate (GlcNAc6P). Its function is as follows. Catalyzes the reversible conversion of alpha-D-glucosamine 6-phosphate (GlcN-6P) into beta-D-fructose 6-phosphate (Fru-6P) and ammonium ion, a regulatory reaction step in de novo uridine diphosphate-N-acetyl-alpha-D-glucosamine (UDP-GlcNAc) biosynthesis via hexosamine pathway. Deamination is coupled to aldo-keto isomerization mediating the metabolic flux from UDP-GlcNAc toward Fru-6P. At high ammonium level can drive amination and isomerization of Fru-6P toward hexosamines and UDP-GlcNAc synthesis. Has a role in fine tuning the metabolic fluctuations of cytosolic UDP-GlcNAc and their effects on hyaluronan synthesis that occur during tissue remodeling. In Mus musculus (Mouse), this protein is Glucosamine-6-phosphate deaminase 2.